The chain runs to 448 residues: Tubulin beta-1 chain (448 aa).

8 residues coordinate GTP: glutamine 11, glutamate 72, serine 141, glycine 145, threonine 146, glycine 147, asparagine 207, and asparagine 229. Mg(2+) is bound at residue glutamate 72. The disordered stretch occupies residues 424–448 (QQYQDAGMDDDEAEEAYEEEEPVEE). Residues 430 to 448 (GMDDDEAEEAYEEEEPVEE) show a composition bias toward acidic residues.

Belongs to the tubulin family. In terms of assembly, dimer of alpha and beta chains. A typical microtubule is a hollow water-filled tube with an outer diameter of 25 nm and an inner diameter of 15 nM. Alpha-beta heterodimers associate head-to-tail to form protofilaments running lengthwise along the microtubule wall with the beta-tubulin subunit facing the microtubule plus end conferring a structural polarity. Microtubules usually have 13 protofilaments but different protofilament numbers can be found in some organisms and specialized cells. Mg(2+) is required as a cofactor.

It is found in the cytoplasm. The protein resides in the cytoskeleton. Functionally, tubulin is the major constituent of microtubules, a cylinder consisting of laterally associated linear protofilaments composed of alpha- and beta-tubulin heterodimers. Microtubules grow by the addition of GTP-tubulin dimers to the microtubule end, where a stabilizing cap forms. Below the cap, tubulin dimers are in GDP-bound state, owing to GTPase activity of alpha-tubulin. In Colletotrichum gloeosporioides (Anthracnose fungus), this protein is Tubulin beta-1 chain (TUB1).